The sequence spans 124 residues: UPF0231 protein Shewana3_0655 (124 aa).

It belongs to the UPF0231 family.

This is UPF0231 protein Shewana3_0655 from Shewanella sp. (strain ANA-3).